The primary structure comprises 284 residues: Pseudouridine-5'-phosphate glycosidase (284 aa).

The Proton donor role is filled by E17. Substrate contacts are provided by K77 and V97. D126 provides a ligand contact to Mn(2+). Substrate is bound at residue S128–D130. Residue K147 is the Nucleophile of the active site.

This sequence belongs to the pseudouridine-5'-phosphate glycosidase family. As to quaternary structure, homotrimer. Mn(2+) is required as a cofactor.

It catalyses the reaction D-ribose 5-phosphate + uracil = psi-UMP + H2O. Catalyzes the reversible cleavage of pseudouridine 5'-phosphate (PsiMP) to ribose 5-phosphate and uracil. Functions biologically in the cleavage direction, as part of a pseudouridine degradation pathway. The polypeptide is Pseudouridine-5'-phosphate glycosidase (Thermotoga petrophila (strain ATCC BAA-488 / DSM 13995 / JCM 10881 / RKU-1)).